The following is a 226-amino-acid chain: tRNA (guanine-N(7)-)-methyltransferase (226 aa).

Residues 1–22 (MTTPQQPHGPLRSFGRLKSRPV) are disordered. Residues E59, E84, D111, and D133 each coordinate S-adenosyl-L-methionine. D133 is a catalytic residue. K137 serves as a coordination point for substrate. An interaction with RNA region spans residues 139–144 (RHNKRR). Residues D169 and 206 to 209 (TRYE) each bind substrate.

This sequence belongs to the class I-like SAM-binding methyltransferase superfamily. TrmB family.

The enzyme catalyses guanosine(46) in tRNA + S-adenosyl-L-methionine = N(7)-methylguanosine(46) in tRNA + S-adenosyl-L-homocysteine. It participates in tRNA modification; N(7)-methylguanine-tRNA biosynthesis. In terms of biological role, catalyzes the formation of N(7)-methylguanine at position 46 (m7G46) in tRNA. In Caulobacter vibrioides (strain ATCC 19089 / CIP 103742 / CB 15) (Caulobacter crescentus), this protein is tRNA (guanine-N(7)-)-methyltransferase.